A 518-amino-acid polypeptide reads, in one-letter code: Bifunctional purine biosynthesis protein PurH (518 aa).

The region spanning 1 to 146 (MARIALISVS…KNHESVSILT (146 aa)) is the MGS-like domain.

It belongs to the PurH family.

The enzyme catalyses (6R)-10-formyltetrahydrofolate + 5-amino-1-(5-phospho-beta-D-ribosyl)imidazole-4-carboxamide = 5-formamido-1-(5-phospho-D-ribosyl)imidazole-4-carboxamide + (6S)-5,6,7,8-tetrahydrofolate. It catalyses the reaction IMP + H2O = 5-formamido-1-(5-phospho-D-ribosyl)imidazole-4-carboxamide. Its pathway is purine metabolism; IMP biosynthesis via de novo pathway; 5-formamido-1-(5-phospho-D-ribosyl)imidazole-4-carboxamide from 5-amino-1-(5-phospho-D-ribosyl)imidazole-4-carboxamide (10-formyl THF route): step 1/1. It functions in the pathway purine metabolism; IMP biosynthesis via de novo pathway; IMP from 5-formamido-1-(5-phospho-D-ribosyl)imidazole-4-carboxamide: step 1/1. The protein is Bifunctional purine biosynthesis protein PurH of Prochlorococcus marinus (strain MIT 9211).